The chain runs to 746 residues: Polyribonucleotide nucleotidyltransferase (746 aa).

Positions 520 and 526 each coordinate Mg(2+). A KH domain is found at 586-648 (PRIITVKVPV…EAARAAVNAI (63 aa)). Residues 657–729 (GERYLGTVVK…PRGKLSLVPV (73 aa)) enclose the S1 motif domain.

The protein belongs to the polyribonucleotide nucleotidyltransferase family. Mg(2+) is required as a cofactor.

The protein resides in the cytoplasm. The enzyme catalyses RNA(n+1) + phosphate = RNA(n) + a ribonucleoside 5'-diphosphate. Functionally, involved in mRNA degradation. Catalyzes the phosphorolysis of single-stranded polyribonucleotides processively in the 3'- to 5'-direction. This Kineococcus radiotolerans (strain ATCC BAA-149 / DSM 14245 / SRS30216) protein is Polyribonucleotide nucleotidyltransferase.